The following is a 298-amino-acid chain: Ribosomal RNA processing protein 36 homolog (298 aa).

A disordered region spans residues 1 to 131 (MKPDIIKKRR…SDAPVEMTAM (131 aa)). Acidic residues predominate over residues 14 to 56 (SDDEDEYNEEDEMYEDDNNNYEEDEDDDDDDDEDDEDDDENEE). Polar residues-rich tracts occupy residues 61 to 70 (QQLSNVSFSS) and 83 to 92 (LNLNTITKNL). Coiled coils occupy residues 88-112 (ITKN…MNSK) and 196-228 (RERD…KNKL). The span at 98-111 (FKKEEQQEKEEMNS) shows a compositional bias: basic and acidic residues. The tract at residues 279-298 (ISSKEKTFLPQRRSFDQDEN) is disordered.

This sequence belongs to the RRP36 family.

It is found in the nucleus. Its subcellular location is the nucleolus. Involved in the early processing steps of the pre-rRNA in the maturation pathway leading to the 18S rRNA. The polypeptide is Ribosomal RNA processing protein 36 homolog (Dictyostelium discoideum (Social amoeba)).